The sequence spans 143 residues: Hemoglobin subunit alpha (143 aa).

The residue at position 2 (S2) is an N-acetylserine. The Globin domain maps to 2–143 (SLSDKDKSAV…VALALAEKYR (142 aa)). Residue H60 participates in O2 binding. Residue H89 participates in heme b binding.

This sequence belongs to the globin family. As to quaternary structure, heterotetramer of two alpha chains and two beta chains. Red blood cells.

Functionally, involved in oxygen transport from gills to the various peripheral tissues. The polypeptide is Hemoglobin subunit alpha (hba) (Pogonophryne scotti (Saddleback plunderfish)).